The sequence spans 97 residues: Aspartyl/glutamyl-tRNA(Asn/Gln) amidotransferase subunit C (97 aa).

It belongs to the GatC family. In terms of assembly, heterotrimer of A, B and C subunits.

The catalysed reaction is L-glutamyl-tRNA(Gln) + L-glutamine + ATP + H2O = L-glutaminyl-tRNA(Gln) + L-glutamate + ADP + phosphate + H(+). The enzyme catalyses L-aspartyl-tRNA(Asn) + L-glutamine + ATP + H2O = L-asparaginyl-tRNA(Asn) + L-glutamate + ADP + phosphate + 2 H(+). Functionally, allows the formation of correctly charged Asn-tRNA(Asn) or Gln-tRNA(Gln) through the transamidation of misacylated Asp-tRNA(Asn) or Glu-tRNA(Gln) in organisms which lack either or both of asparaginyl-tRNA or glutaminyl-tRNA synthetases. The reaction takes place in the presence of glutamine and ATP through an activated phospho-Asp-tRNA(Asn) or phospho-Glu-tRNA(Gln). This is Aspartyl/glutamyl-tRNA(Asn/Gln) amidotransferase subunit C from Picosynechococcus sp. (strain ATCC 27264 / PCC 7002 / PR-6) (Agmenellum quadruplicatum).